The primary structure comprises 164 residues: UPF0305 protein MJ0646 (164 aa).

It belongs to the UPF0305 family.

The sequence is that of UPF0305 protein MJ0646 from Methanocaldococcus jannaschii (strain ATCC 43067 / DSM 2661 / JAL-1 / JCM 10045 / NBRC 100440) (Methanococcus jannaschii).